The sequence spans 569 residues: Potassium-transporting ATPase potassium-binding subunit (569 aa).

10 consecutive transmembrane segments (helical) span residues 3–23 (TEIL…YPLG), 64–84 (FLKS…ILLV), 133–153 (FVIM…MAGI), 179–199 (ILFP…TPMG), 255–275 (IVEC…LGFY), 281–301 (LGYV…FCNV), 375–395 (FGGV…AVFI), 421–441 (IVSL…SYVW), 497–517 (LALI…AGLL), and 535–555 (VTFG…SFFP).

The protein belongs to the KdpA family. As to quaternary structure, the system is composed of three essential subunits: KdpA, KdpB and KdpC.

Its subcellular location is the cell inner membrane. Its function is as follows. Part of the high-affinity ATP-driven potassium transport (or Kdp) system, which catalyzes the hydrolysis of ATP coupled with the electrogenic transport of potassium into the cytoplasm. This subunit binds the periplasmic potassium ions and delivers the ions to the membrane domain of KdpB through an intramembrane tunnel. This is Potassium-transporting ATPase potassium-binding subunit from Parabacteroides distasonis (strain ATCC 8503 / DSM 20701 / CIP 104284 / JCM 5825 / NCTC 11152).